Consider the following 402-residue polypeptide: Phosphoglycerate kinase (402 aa).

Substrate-binding positions include 29–31 (DFN), Arg-45, 69–72 (HLGR), Arg-125, and Arg-158. ATP-binding positions include Lys-209, Glu-331, and 357–360 (GGDT).

This sequence belongs to the phosphoglycerate kinase family.

The protein resides in the cytoplasm. The enzyme catalyses (2R)-3-phosphoglycerate + ATP = (2R)-3-phospho-glyceroyl phosphate + ADP. The protein operates within carbohydrate degradation; glycolysis; pyruvate from D-glyceraldehyde 3-phosphate: step 2/5. In Helicobacter pylori (strain ATCC 700392 / 26695) (Campylobacter pylori), this protein is Phosphoglycerate kinase (pgk).